The following is a 269-amino-acid chain: NAD-capped RNA hydrolase NudC (269 aa).

Arg-81 is a binding site for substrate. Zn(2+) is bound by residues Cys-110, Cys-113, Cys-128, and Cys-131. A substrate-binding site is contributed by Tyr-136. Residues 137–260 enclose the Nudix hydrolase domain; that stretch reads PRIFPCIIVA…TIARALIEQT (124 aa). A divalent metal cation-binding residues include Ala-170, Glu-186, and Glu-190. The Nudix box signature appears at 171 to 192; sequence GFVEVGETLEQCVAREVLEETG. Substrate is bound at residue 204–211; sequence QPWAFPSS. Glu-231 provides a ligand contact to a divalent metal cation. Ala-253 lines the substrate pocket.

The protein belongs to the Nudix hydrolase family. NudC subfamily. Homodimer. Mg(2+) serves as cofactor. It depends on Mn(2+) as a cofactor. The cofactor is Zn(2+).

The enzyme catalyses a 5'-end NAD(+)-phospho-ribonucleoside in mRNA + H2O = a 5'-end phospho-adenosine-phospho-ribonucleoside in mRNA + beta-nicotinamide D-ribonucleotide + 2 H(+). The catalysed reaction is NAD(+) + H2O = beta-nicotinamide D-ribonucleotide + AMP + 2 H(+). It carries out the reaction NADH + H2O = reduced beta-nicotinamide D-ribonucleotide + AMP + 2 H(+). Functionally, mRNA decapping enzyme that specifically removes the nicotinamide adenine dinucleotide (NAD) cap from a subset of mRNAs by hydrolyzing the diphosphate linkage to produce nicotinamide mononucleotide (NMN) and 5' monophosphate mRNA. The NAD-cap is present at the 5'-end of some mRNAs and stabilizes RNA against 5'-processing. Has preference for mRNAs with a 5'-end purine. Catalyzes the hydrolysis of a broad range of dinucleotide pyrophosphates. The chain is NAD-capped RNA hydrolase NudC from Vibrio cholerae serotype O1 (strain ATCC 39315 / El Tor Inaba N16961).